We begin with the raw amino-acid sequence, 652 residues long: DNA ligase (652 aa).

Residues 29-33 (DSEYD), 78-79 (SL), and glutamate 107 each bind NAD(+). The active-site N6-AMP-lysine intermediate is lysine 109. NAD(+) contacts are provided by arginine 130, glutamate 164, lysine 278, and lysine 302. Zn(2+) contacts are provided by cysteine 395, cysteine 398, cysteine 413, and cysteine 418. In terms of domain architecture, BRCT spans 577 to 652 (VADAALSGLT…VRDEAWLESL (76 aa)).

This sequence belongs to the NAD-dependent DNA ligase family. LigA subfamily. Requires Mg(2+) as cofactor. It depends on Mn(2+) as a cofactor.

The catalysed reaction is NAD(+) + (deoxyribonucleotide)n-3'-hydroxyl + 5'-phospho-(deoxyribonucleotide)m = (deoxyribonucleotide)n+m + AMP + beta-nicotinamide D-nucleotide.. In terms of biological role, DNA ligase that catalyzes the formation of phosphodiester linkages between 5'-phosphoryl and 3'-hydroxyl groups in double-stranded DNA using NAD as a coenzyme and as the energy source for the reaction. It is essential for DNA replication and repair of damaged DNA. The polypeptide is DNA ligase (Streptococcus pneumoniae (strain CGSP14)).